The following is an 83-amino-acid chain: Small ribosomal subunit protein bS18A (83 aa).

It belongs to the bacterial ribosomal protein bS18 family. Part of the 30S ribosomal subunit. Forms a tight heterodimer with protein bS6.

Its function is as follows. Binds as a heterodimer with protein bS6 to the central domain of the 16S rRNA, where it helps stabilize the platform of the 30S subunit. The protein is Small ribosomal subunit protein bS18A of Nocardia farcinica (strain IFM 10152).